The chain runs to 279 residues: Borealin (279 aa).

Residues 135–152 (KTKAKVAAKKPSTARKTR) are compositionally biased toward basic residues. The disordered stretch occupies residues 135–180 (KTKAKVAAKKPSTARKTRASTANLTNTSKRTSKRGRATPSASKQIE). A compositionally biased stretch (polar residues) spans 153 to 163 (ASTANLTNTSK).

This sequence belongs to the borealin family. In terms of assembly, component of the CPC at least composed of survivin/birc5, incenp, cdca8/borealin and/or cdca9/dasra-A, and aurkb/aurora-B. Interacts with incenp (via N-terminus).

It localises to the nucleus. The protein resides in the chromosome. Its subcellular location is the centromere. It is found in the cytoplasm. The protein localises to the cytoskeleton. It localises to the spindle. Its function is as follows. Component of the chromosomal passenger complex (CPC), a complex that acts as a key regulator of mitosis. The CPC complex has essential functions at the centromere in ensuring correct chromosome alignment and segregation and is required for chromatin-induced microtubule stabilization and spindle assembly. Contributes to CPC function by facilitating loading of the CPC onto chromosomes. This Xenopus tropicalis (Western clawed frog) protein is Borealin (cdca8).